The following is a 266-amino-acid chain: Tryptophan synthase alpha chain (266 aa).

Active-site proton acceptor residues include glutamate 52 and aspartate 63.

This sequence belongs to the TrpA family. In terms of assembly, tetramer of two alpha and two beta chains.

It carries out the reaction (1S,2R)-1-C-(indol-3-yl)glycerol 3-phosphate + L-serine = D-glyceraldehyde 3-phosphate + L-tryptophan + H2O. It functions in the pathway amino-acid biosynthesis; L-tryptophan biosynthesis; L-tryptophan from chorismate: step 5/5. Its function is as follows. The alpha subunit is responsible for the aldol cleavage of indoleglycerol phosphate to indole and glyceraldehyde 3-phosphate. This is Tryptophan synthase alpha chain from Nocardia farcinica (strain IFM 10152).